The chain runs to 168 residues: Large ribosomal subunit protein uL24 (168 aa).

Positions 112–168 (LEGKDPRKQPKEAPKAAEKPAKEEPKKETPKAEEKPAKEEPKETKVEKKSEEKEDEN) are disordered.

Belongs to the universal ribosomal protein uL24 family. As to quaternary structure, part of the 50S ribosomal subunit.

In terms of biological role, one of two assembly initiator proteins, it binds directly to the 5'-end of the 23S rRNA, where it nucleates assembly of the 50S subunit. Functionally, located at the polypeptide exit tunnel on the outside of the subunit. This chain is Large ribosomal subunit protein uL24, found in Nitrosopumilus maritimus (strain SCM1).